Here is a 447-residue protein sequence, read N- to C-terminus: Serine/threonine-protein phosphatase 2A 55 kDa regulatory subunit B gamma isoform (447 aa).

7 WD repeats span residues 22–61 (TPAD…KNAP), 87–128 (EIEE…KRPE), 171–209 (GHTY…RSFN), 220–260 (DLTE…LCDK), 279–317 (EIIS…RPIE), 334–375 (ENDC…DVTL), and 410–446 (DFTK…NSDM).

This sequence belongs to the phosphatase 2A regulatory subunit B family. PP2A consists of a common heterodimeric core enzyme, composed of a 36 kDa catalytic subunit (subunit C) and a 65 kDa constant regulatory subunit (PR65 or subunit A), that associates with a variety of regulatory subunits. Proteins that associate with the core dimer include three families of regulatory subunits B (the R2/B/PR55/B55, R3/B''/PR72/PR130/PR59 and R5/B'/B56 families), the 48 kDa variable regulatory subunit, viral proteins, and cell signaling molecules. Interacts with IER5.

The B regulatory subunit might modulate substrate selectivity and catalytic activity, and might also direct the localization of the catalytic enzyme to a particular subcellular compartment. This Macaca fascicularis (Crab-eating macaque) protein is Serine/threonine-protein phosphatase 2A 55 kDa regulatory subunit B gamma isoform (PPP2R2C).